The chain runs to 163 residues: Transcriptional repressor NrdR (163 aa).

Residues 3 to 34 (CPFCRHDDSRVVDSRTTDDGSSIRRRRQCPNC) fold into a zinc finger. An ATP-cone domain is found at 46-136 (LSVIKRSGAP…VYQAFDSLAD (91 aa)).

This sequence belongs to the NrdR family. Zn(2+) serves as cofactor.

Functionally, negatively regulates transcription of bacterial ribonucleotide reductase nrd genes and operons by binding to NrdR-boxes. In Kineococcus radiotolerans (strain ATCC BAA-149 / DSM 14245 / SRS30216), this protein is Transcriptional repressor NrdR.